We begin with the raw amino-acid sequence, 547 residues long: Varicidin biosynthesis cluster MFS-type transporer (547 aa).

The span at 1–17 (MTTSTSKNAISKSSQED) shows a compositional bias: polar residues. The tract at residues 1–33 (MTTSTSKNAISKSSQEDLCSDTKDKGSSGGGNE) is disordered. Transmembrane regions (helical) follow at residues 47 to 67 (LVLLFVGLALSVFCLSLVCIS), 156 to 176 (LAPSLLLPGLCPCIVAQSVFT), 183 to 203 (WCFWINLPLGGVTAVAVFLFV), 224 to 244 (ALGTCILMPLIICLLLALQWG), 252 to 272 (SWRVVLCLVLFTVLLVAWLYV), 296 to 316 (ILFTFGINGSMFIIVYYVPIW), 330 to 350 (INFLACSGSMSVAAIIAGTLV), 360 to 382 (GQWRIFNYTTLVSIATGLIWRYN), 392 to 412 (AGTLVMFGFGAGSGMQMPFIA), 422 to 442 (ISLGSSLIILIQTMGGAVFLA), and 503 to 523 (CFLVCIVLACLTIIADAGMEW).

It belongs to the major facilitator superfamily. TCR/Tet family.

The protein localises to the cell membrane. MFS-type transporer; part of the gene cluster that mediates the biosynthesis of varicidin A, an antifungal natural product containing a cis-octahydrodecalin core. This is Varicidin biosynthesis cluster MFS-type transporer from Talaromyces variabilis (Penicillium variabile).